We begin with the raw amino-acid sequence, 375 residues long: Acetylornithine aminotransferase (375 aa).

Pyridoxal 5'-phosphate is bound by residues Gly93–Thr94 and Phe120. Arg123 is a binding site for N(2)-acetyl-L-ornithine. Asp205–Gln208 serves as a coordination point for pyridoxal 5'-phosphate. Lys234 carries the post-translational modification N6-(pyridoxal phosphate)lysine. Thr262 is a binding site for N(2)-acetyl-L-ornithine. Thr263 contacts pyridoxal 5'-phosphate.

The protein belongs to the class-III pyridoxal-phosphate-dependent aminotransferase family. ArgD subfamily. In terms of assembly, homodimer. The cofactor is pyridoxal 5'-phosphate.

The protein localises to the cytoplasm. The enzyme catalyses N(2)-acetyl-L-ornithine + 2-oxoglutarate = N-acetyl-L-glutamate 5-semialdehyde + L-glutamate. The protein operates within amino-acid biosynthesis; L-arginine biosynthesis; N(2)-acetyl-L-ornithine from L-glutamate: step 4/4. The chain is Acetylornithine aminotransferase from Staphylococcus epidermidis (strain ATCC 35984 / DSM 28319 / BCRC 17069 / CCUG 31568 / BM 3577 / RP62A).